Consider the following 103-residue polypeptide: UPF0091 protein PH0944 (103 aa).

This sequence belongs to the UPF0091 family.

This Pyrococcus horikoshii (strain ATCC 700860 / DSM 12428 / JCM 9974 / NBRC 100139 / OT-3) protein is UPF0091 protein PH0944.